Reading from the N-terminus, the 1227-residue chain is Pentatricopeptide repeat-containing protein At5g15280, mitochondrial (1227 aa).

The transit peptide at 1 to 31 (MLNLLSISSSSRLRFLNKVSSLTYHYSFAFF) directs the protein to the mitochondrion. 28 PPR repeats span residues 146–180 (LPQA…GDTM), 182–216 (NEGI…GLVP), 217–251 (LTSC…RAEL), 255–289 (NIDS…GCIL), 290–320 (NSSI…VKYE), 322–356 (DVFV…GFKQ), 357–391 (DEVT…GYKP), 392–426 (DVYS…GMML), 427–461 (SLST…GLIE), 527–561 (VLPE…GQKL), 562–597 (SRRS…AYQL), 598–632 (DGET…HHPI), 633–667 (DNVT…NWLP), 668–698 (DLND…VFIS), 703–737 (QSEA…GCIV), 738–772 (EQEV…KHIP), 773–800 (SLGS…AEQI), 802–836 (SSYV…GLSS), 837–871 (YNKI…NIIC), 872–906 (SVKS…ESNP), 908–942 (GVII…GVLP), 943–977 (DETT…GMKP), 978–1012 (NNRS…GWNL), 1014–1044 (SSVV…VTRN), 1047–1081 (MAPN…QSIP), 1082–1116 (GSSS…GLSP), 1117–1151 (SIST…GESP), and 1152–1186 (SQEM…GYEV).

This sequence belongs to the PPR family. P subfamily.

It localises to the mitochondrion. The sequence is that of Pentatricopeptide repeat-containing protein At5g15280, mitochondrial from Arabidopsis thaliana (Mouse-ear cress).